The sequence spans 619 residues: Dihydroxy-acid dehydratase (619 aa).

Aspartate 81 provides a ligand contact to Mg(2+). Residue cysteine 122 participates in [2Fe-2S] cluster binding. Mg(2+)-binding residues include aspartate 123 and lysine 124. Lysine 124 is modified (N6-carboxylysine). A [2Fe-2S] cluster-binding site is contributed by cysteine 195. A Mg(2+)-binding site is contributed by glutamate 494. Serine 520 functions as the Proton acceptor in the catalytic mechanism.

It belongs to the IlvD/Edd family. In terms of assembly, homodimer. [2Fe-2S] cluster serves as cofactor. It depends on Mg(2+) as a cofactor.

The catalysed reaction is (2R)-2,3-dihydroxy-3-methylbutanoate = 3-methyl-2-oxobutanoate + H2O. It catalyses the reaction (2R,3R)-2,3-dihydroxy-3-methylpentanoate = (S)-3-methyl-2-oxopentanoate + H2O. The protein operates within amino-acid biosynthesis; L-isoleucine biosynthesis; L-isoleucine from 2-oxobutanoate: step 3/4. It participates in amino-acid biosynthesis; L-valine biosynthesis; L-valine from pyruvate: step 3/4. Functionally, functions in the biosynthesis of branched-chain amino acids. Catalyzes the dehydration of (2R,3R)-2,3-dihydroxy-3-methylpentanoate (2,3-dihydroxy-3-methylvalerate) into 2-oxo-3-methylpentanoate (2-oxo-3-methylvalerate) and of (2R)-2,3-dihydroxy-3-methylbutanoate (2,3-dihydroxyisovalerate) into 2-oxo-3-methylbutanoate (2-oxoisovalerate), the penultimate precursor to L-isoleucine and L-valine, respectively. The sequence is that of Dihydroxy-acid dehydratase from Shewanella oneidensis (strain ATCC 700550 / JCM 31522 / CIP 106686 / LMG 19005 / NCIMB 14063 / MR-1).